The primary structure comprises 381 residues: Queuine tRNA-ribosyltransferase (381 aa).

Asp-96 acts as the Proton acceptor in catalysis. Substrate-binding positions include 96–100 (DSGGF), Asp-150, Gln-193, and Gly-220. The RNA binding stretch occupies residues 251-257 (GVGSPDA). Catalysis depends on Asp-270, which acts as the Nucleophile. The RNA binding; important for wobble base 34 recognition stretch occupies residues 275-279 (TRIAR). Residues Cys-308, Cys-310, Cys-313, and His-339 each contribute to the Zn(2+) site.

It belongs to the queuine tRNA-ribosyltransferase family. In terms of assembly, homodimer. Within each dimer, one monomer is responsible for RNA recognition and catalysis, while the other monomer binds to the replacement base PreQ1. Requires Zn(2+) as cofactor.

The enzyme catalyses 7-aminomethyl-7-carbaguanine + guanosine(34) in tRNA = 7-aminomethyl-7-carbaguanosine(34) in tRNA + guanine. It participates in tRNA modification; tRNA-queuosine biosynthesis. Functionally, catalyzes the base-exchange of a guanine (G) residue with the queuine precursor 7-aminomethyl-7-deazaguanine (PreQ1) at position 34 (anticodon wobble position) in tRNAs with GU(N) anticodons (tRNA-Asp, -Asn, -His and -Tyr). Catalysis occurs through a double-displacement mechanism. The nucleophile active site attacks the C1' of nucleotide 34 to detach the guanine base from the RNA, forming a covalent enzyme-RNA intermediate. The proton acceptor active site deprotonates the incoming PreQ1, allowing a nucleophilic attack on the C1' of the ribose to form the product. After dissociation, two additional enzymatic reactions on the tRNA convert PreQ1 to queuine (Q), resulting in the hypermodified nucleoside queuosine (7-(((4,5-cis-dihydroxy-2-cyclopenten-1-yl)amino)methyl)-7-deazaguanosine). This is Queuine tRNA-ribosyltransferase from Bacillus velezensis (strain DSM 23117 / BGSC 10A6 / LMG 26770 / FZB42) (Bacillus amyloliquefaciens subsp. plantarum).